We begin with the raw amino-acid sequence, 77 residues long: Acyl carrier protein (77 aa).

Positions 2-77 (SNIEERVRNI…SAIDYVVNNG (76 aa)) constitute a Carrier domain. Serine 37 is subject to O-(pantetheine 4'-phosphoryl)serine.

It belongs to the acyl carrier protein (ACP) family. Post-translationally, 4'-phosphopantetheine is transferred from CoA to a specific serine of apo-ACP by AcpS. This modification is essential for activity because fatty acids are bound in thioester linkage to the sulfhydryl of the prosthetic group.

The protein localises to the cytoplasm. Its pathway is lipid metabolism; fatty acid biosynthesis. Carrier of the growing fatty acid chain in fatty acid biosynthesis. The protein is Acyl carrier protein of Psychromonas ingrahamii (strain DSM 17664 / CCUG 51855 / 37).